We begin with the raw amino-acid sequence, 381 residues long: 4-hydroxy-3-methylbut-2-en-1-yl diphosphate synthase (flavodoxin) (381 aa).

Positions 280, 283, 315, and 322 each coordinate [4Fe-4S] cluster.

The protein belongs to the IspG family. [4Fe-4S] cluster serves as cofactor.

It carries out the reaction (2E)-4-hydroxy-3-methylbut-2-enyl diphosphate + oxidized [flavodoxin] + H2O + 2 H(+) = 2-C-methyl-D-erythritol 2,4-cyclic diphosphate + reduced [flavodoxin]. Its pathway is isoprenoid biosynthesis; isopentenyl diphosphate biosynthesis via DXP pathway; isopentenyl diphosphate from 1-deoxy-D-xylulose 5-phosphate: step 5/6. Its function is as follows. Converts 2C-methyl-D-erythritol 2,4-cyclodiphosphate (ME-2,4cPP) into 1-hydroxy-2-methyl-2-(E)-butenyl 4-diphosphate. This is 4-hydroxy-3-methylbut-2-en-1-yl diphosphate synthase (flavodoxin) from Clavibacter sepedonicus (Clavibacter michiganensis subsp. sepedonicus).